Consider the following 239-residue polypeptide: ATP-dependent dethiobiotin synthetase BioD (239 aa).

15–20 (EIGKTF) lines the ATP pocket. Mg(2+) is bound at residue Thr19. Lys40 is a catalytic residue. ATP is bound by residues Asp57, 118 to 121 (EGVG), and 178 to 179 (NH). Mg(2+)-binding residues include Asp57 and Glu118.

The protein belongs to the dethiobiotin synthetase family. As to quaternary structure, homodimer. Mg(2+) serves as cofactor.

The protein localises to the cytoplasm. The catalysed reaction is (7R,8S)-7,8-diammoniononanoate + CO2 + ATP = (4R,5S)-dethiobiotin + ADP + phosphate + 3 H(+). It participates in cofactor biosynthesis; biotin biosynthesis; biotin from 7,8-diaminononanoate: step 1/2. In terms of biological role, catalyzes a mechanistically unusual reaction, the ATP-dependent insertion of CO2 between the N7 and N8 nitrogen atoms of 7,8-diaminopelargonic acid (DAPA, also called 7,8-diammoniononanoate) to form a ureido ring. The polypeptide is ATP-dependent dethiobiotin synthetase BioD (Burkholderia multivorans (strain ATCC 17616 / 249)).